Reading from the N-terminus, the 49-residue chain is Large ribosomal subunit protein bL33 (49 aa).

Belongs to the bacterial ribosomal protein bL33 family.

In Clostridium acetobutylicum (strain ATCC 824 / DSM 792 / JCM 1419 / IAM 19013 / LMG 5710 / NBRC 13948 / NRRL B-527 / VKM B-1787 / 2291 / W), this protein is Large ribosomal subunit protein bL33.